Consider the following 472-residue polypeptide: Coenzyme F(430) synthetase (472 aa).

Residue G119–S125 coordinates ATP.

The protein belongs to the MurCDEF family.

The catalysed reaction is 15,17(3)-seco-F430-17(3)-acid + ATP = coenzyme F430 + ADP + phosphate. In terms of biological role, involved in the biosynthesis of the unique nickel-containing tetrapyrrole coenzyme F430, the prosthetic group of methyl-coenzyme M reductase (MCR), which plays a key role in methanogenesis and anaerobic methane oxidation. Catalyzes the activation the g-propionate side chain of 15,17(3)-seco-F430-17(3)-acid (seco-F430) for intramolecular C-C bond formation to yield the carbocyclic F ring of coenzyme F430. This chain is Coenzyme F(430) synthetase, found in Methanosarcina acetivorans (strain ATCC 35395 / DSM 2834 / JCM 12185 / C2A).